Here is a 310-residue protein sequence, read N- to C-terminus: HPr kinase/phosphorylase (310 aa).

Catalysis depends on residues histidine 138 and lysine 159. Residue glycine 153–serine 160 coordinates ATP. Position 160 (serine 160) interacts with Mg(2+). Aspartate 177 acts as the Proton acceptor; for phosphorylation activity. Proton donor; for dephosphorylation activity in catalysis. Positions leucine 201–asparagine 210 are important for the catalytic mechanism of both phosphorylation and dephosphorylation. Glutamate 202 contributes to the Mg(2+) binding site. Arginine 243 is a catalytic residue. Residues proline 264–arginine 269 form an important for the catalytic mechanism of dephosphorylation region.

It belongs to the HPrK/P family. In terms of assembly, homohexamer. Mg(2+) serves as cofactor.

It catalyses the reaction [HPr protein]-L-serine + ATP = [HPr protein]-O-phospho-L-serine + ADP + H(+). The catalysed reaction is [HPr protein]-O-phospho-L-serine + phosphate + H(+) = [HPr protein]-L-serine + diphosphate. In terms of biological role, catalyzes the ATP- as well as the pyrophosphate-dependent phosphorylation of a specific serine residue in HPr, a phosphocarrier protein of the phosphoenolpyruvate-dependent sugar phosphotransferase system (PTS). HprK/P also catalyzes the pyrophosphate-producing, inorganic phosphate-dependent dephosphorylation (phosphorolysis) of seryl-phosphorylated HPr (P-Ser-HPr). The two antagonistic activities of HprK/P are regulated by several intracellular metabolites, which change their concentration in response to the absence or presence of rapidly metabolisable carbon sources (glucose, fructose, etc.) in the growth medium. Also phosphorylates/dephosphorylates the HPr-like catabolite repression protein crh on a specific serine residue. Therefore, by controlling the phosphorylation state of HPr and crh, HPrK/P is a sensor enzyme that plays a major role in the regulation of carbon metabolism and sugar transport: it mediates carbon catabolite repression (CCR), and regulates PTS-catalyzed carbohydrate uptake and inducer exclusion. In Halalkalibacterium halodurans (strain ATCC BAA-125 / DSM 18197 / FERM 7344 / JCM 9153 / C-125) (Bacillus halodurans), this protein is HPr kinase/phosphorylase (hprK).